The chain runs to 462 residues: Elongation factor 1-alpha 1 (462 aa).

Position 2 is a n,N,N-trimethylglycine (Gly2). Positions Lys5–Thr242 constitute a tr-type G domain. Positions Gly14–Ser21 are G1. Position 14–21 (Gly14–Ser21) interacts with GTP. The G2 stretch occupies residues Gly70–Asp74. The interval Asp91–Gly94 is G3. Residues Asn153 to Asp156 and Ser194 to Trp196 contribute to the GTP site. Residues Asn153–Asp156 form a G4 region. The segment at Ser194–Trp196 is G5. A 5-glutamyl glycerylphosphorylethanolamine mark is found at Glu301 and Glu374.

The protein belongs to the TRAFAC class translation factor GTPase superfamily. Classic translation factor GTPase family. EF-Tu/EF-1A subfamily.

It is found in the cytoplasm. The catalysed reaction is GTP + H2O = GDP + phosphate + H(+). In terms of biological role, translation elongation factor that catalyzes the GTP-dependent binding of aminoacyl-tRNA (aa-tRNA) to the A-site of ribosomes during the elongation phase of protein synthesis. Base pairing between the mRNA codon and the aa-tRNA anticodon promotes GTP hydrolysis, releasing the aa-tRNA from EEF1A1 and allowing its accommodation into the ribosome. The growing protein chain is subsequently transferred from the P-site peptidyl tRNA to the A-site aa-tRNA, extending it by one amino acid through ribosome-catalyzed peptide bond formation. This is Elongation factor 1-alpha 1 (EEF1A) from Gallus gallus (Chicken).